We begin with the raw amino-acid sequence, 205 residues long: Ribosomal RNA small subunit methyltransferase G (205 aa).

Residues Gly70, Leu75, 124-125 (IE), and Arg138 each bind S-adenosyl-L-methionine.

The protein belongs to the methyltransferase superfamily. RNA methyltransferase RsmG family.

Its subcellular location is the cytoplasm. It catalyses the reaction guanosine(527) in 16S rRNA + S-adenosyl-L-methionine = N(7)-methylguanosine(527) in 16S rRNA + S-adenosyl-L-homocysteine. In terms of biological role, specifically methylates the N7 position of guanine in position 527 of 16S rRNA. The protein is Ribosomal RNA small subunit methyltransferase G of Ruegeria sp. (strain TM1040) (Silicibacter sp.).